The primary structure comprises 311 residues: HPr kinase/phosphorylase (311 aa).

Catalysis depends on residues His-138 and Lys-159. 153-160 (GKSGVGKS) contributes to the ATP binding site. Ser-160 serves as a coordination point for Mg(2+). Asp-177 acts as the Proton acceptor; for phosphorylation activity. Proton donor; for dephosphorylation activity in catalysis. The interval 201-210 (LEIRGLGIIN) is important for the catalytic mechanism of both phosphorylation and dephosphorylation. Position 202 (Glu-202) interacts with Mg(2+). Arg-243 is a catalytic residue. The tract at residues 264–269 (PVRPGR) is important for the catalytic mechanism of dephosphorylation.

It belongs to the HPrK/P family. In terms of assembly, homohexamer. Requires Mg(2+) as cofactor.

It catalyses the reaction [HPr protein]-L-serine + ATP = [HPr protein]-O-phospho-L-serine + ADP + H(+). The catalysed reaction is [HPr protein]-O-phospho-L-serine + phosphate + H(+) = [HPr protein]-L-serine + diphosphate. Its function is as follows. Catalyzes the ATP- as well as the pyrophosphate-dependent phosphorylation of a specific serine residue in HPr, a phosphocarrier protein of the phosphoenolpyruvate-dependent sugar phosphotransferase system (PTS). HprK/P also catalyzes the pyrophosphate-producing, inorganic phosphate-dependent dephosphorylation (phosphorolysis) of seryl-phosphorylated HPr (P-Ser-HPr). The two antagonistic activities of HprK/P are regulated by several intracellular metabolites, which change their concentration in response to the absence or presence of rapidly metabolisable carbon sources (glucose, fructose, etc.) in the growth medium. Also phosphorylates/dephosphorylates the HPr-like catabolite repression protein crh on a specific serine residue. Therefore, by controlling the phosphorylation state of HPr and crh, HPrK/P is a sensor enzyme that plays a major role in the regulation of carbon metabolism and sugar transport: it mediates carbon catabolite repression (CCR), and regulates PTS-catalyzed carbohydrate uptake and inducer exclusion. This Geobacillus sp. (strain WCH70) protein is HPr kinase/phosphorylase.